The following is a 104-amino-acid chain: uncharacterized protein (104 aa).

Residues 72 to 92 traverse the membrane as a helical segment; sequence LIFSHNIVIIVSPIYMISFII.

The protein localises to the membrane. This is an uncharacterized protein from Saccharomyces cerevisiae (strain ATCC 204508 / S288c) (Baker's yeast).